Here is a 213-residue protein sequence, read N- to C-terminus: Putative manganese efflux pump MntP (213 aa).

Transmembrane regions (helical) follow at residues 3–23 (ILSIVLTGFGLAMDAFAVSVA), 36–56 (ALKVALFFGGFQALMPLIGWG), 67–87 (AFDHWIAFILLGFIGGKMIFE), 130–150 (LAIATSIDALAVGVSFAFLGI), 152–172 (IVQTIIIIGIITFVLCFLGVI), and 187–207 (IVGGVILILIGINILLEHTGI).

The protein belongs to the MntP (TC 9.B.29) family.

It localises to the cell membrane. Probably functions as a manganese efflux pump. In Clostridium perfringens (strain ATCC 13124 / DSM 756 / JCM 1290 / NCIMB 6125 / NCTC 8237 / Type A), this protein is Putative manganese efflux pump MntP.